The chain runs to 443 residues: Nuclear distribution protein nudF (443 aa).

Positions 9-41 (QAEELHKSIIAYLSSINASRSCEVLREELQVDS) constitute a LisH domain. The stretch at 60 to 87 (TGIARLQKKILDLESKLAGLQTELDTIS) forms a coiled coil. WD repeat units lie at residues 111–152 (SHRD…RTLK), 154–194 (HMRP…ANVR), 198–238 (GHDH…CVKV), 241–280 (SQGS…SVAS), 283–343 (GHEN…IKTL), 345–384 (GHDN…RLVK), 388–427 (AHGH…PGFQ), and 429–443 (VIAT…RIFT).

It belongs to the WD repeat LIS1/nudF family. In terms of assembly, self-associates. Interacts with nudE and dynein.

The protein localises to the cytoplasm. The protein resides in the cytoskeleton. Its subcellular location is the spindle pole. Functionally, positively regulates the activity of the minus-end directed microtubule motor protein dynein. May enhance dynein-mediated microtubule sliding by targeting dynein to the microtubule plus end. Required for nuclear migration during vegetative growth as well as development. Required for retrograde early endosome (EE) transport from the hyphal tip. Required for localization of dynein to the mitotic spindle poles. Recruits additional proteins to the dynein complex at SPBs. The sequence is that of Nuclear distribution protein nudF from Aspergillus niger (strain ATCC MYA-4892 / CBS 513.88 / FGSC A1513).